The sequence spans 201 residues: Recombination protein RecR (201 aa).

A C4-type zinc finger spans residues 60–75 (CSCCGNVDTSDPCTIC). Residues 83-178 (ATLIVVEDVS…RVTRLAHGVP (96 aa)) enclose the Toprim domain.

It belongs to the RecR family.

Its function is as follows. May play a role in DNA repair. It seems to be involved in an RecBC-independent recombinational process of DNA repair. It may act with RecF and RecO. This Brucella melitensis biotype 2 (strain ATCC 23457) protein is Recombination protein RecR.